The following is a 134-amino-acid chain: Protein NrdI (134 aa).

Belongs to the NrdI family.

Functionally, probably involved in ribonucleotide reductase function. In Rhizobium etli (strain CIAT 652), this protein is Protein NrdI.